We begin with the raw amino-acid sequence, 213 residues long: Ras-related protein Rab-39B (213 aa).

Positions 17, 20, 21, 22, 23, 37, and 40 each coordinate GTP. Position 22 (Ser22) interacts with Mg(2+). A switch-I region spans residues 35–43 (QVSDPTVGV). Residues Thr40 and Asp64 each coordinate Mg(2+). The GTP site is built by Gly67, His123, Lys124, Asp126, Ala154, and Arg155. The segment at 67–83 (GQERFRSITRAYYRNSV) is switch-II. Residue Ser201 is modified to Phosphoserine. Residues Cys211 and Cys213 are each lipidated (S-geranylgeranyl cysteine). Cys213 carries the cysteine methyl ester modification.

This sequence belongs to the small GTPase superfamily. Rab family. Interacts (GDP-bound) with C9orf72; C9orf72 in complex with SMCR8 acts as a GEF for RAB39B. Interacts (in GTP-bound form) with PICK1 (via PDZ domain); a PICK1 homodimer may allow simultaneous association of RAB39B and GRIA2 to PICK1 which is involved in GRIA2 trafficking. Interacts with isoform c of RASSF1; the interaction is strong. Interacts with isoform a of RASSF1; the interaction is weak. Interacts with the DLG4/PSD-95. Interacts (GTP-bound) with HOPS complex components VPS39 and VPS41. Mg(2+) is required as a cofactor.

It localises to the cell membrane. The protein resides in the cytoplasmic vesicle membrane. Its subcellular location is the golgi apparatus. It is found in the cytoplasmic vesicle. The protein localises to the autophagosome membrane. It localises to the autolysosome membrane. The enzyme catalyses GTP + H2O = GDP + phosphate + H(+). Its activity is regulated as follows. Regulated by guanine nucleotide exchange factors (GEFs) including C9orf72-SMCR8 complex, which promote the exchange of bound GDP for free GTP. Regulated by GTPase activating proteins (GAPs) which increase the GTP hydrolysis activity. Inhibited by GDP dissociation inhibitors (GDIs). Its function is as follows. The small GTPases Rab are key regulators of intracellular membrane trafficking, from the formation of transport vesicles to their fusion with membranes. Rabs cycle between an inactive GDP-bound form and an active GTP-bound form that is able to recruit to membranes different sets of downstream effectors directly responsible for vesicle formation, movement, tethering and fusion. RAB39B is involved in autophagy and may function in autophagosome formation. Binds downstream effector PICK1 to ensure selectively GRIA2 exit from the endoplasmic reticulum to the Golgi and to regulate AMPAR composition at the post-synapses and thus synaptic transmission. May regulate the homeostasis of SNCA/alpha-synuclein. This chain is Ras-related protein Rab-39B (RAB39B), found in Bos taurus (Bovine).